The chain runs to 302 residues: Sulfate adenylyltransferase subunit 2 (302 aa).

The interval 280-302 (RQGRAIDHDQSGSMELKKRQGYF) is disordered.

It belongs to the PAPS reductase family. CysD subfamily. As to quaternary structure, heterodimer composed of CysD, the smaller subunit, and CysN.

The enzyme catalyses sulfate + ATP + H(+) = adenosine 5'-phosphosulfate + diphosphate. It functions in the pathway sulfur metabolism; hydrogen sulfide biosynthesis; sulfite from sulfate: step 1/3. In terms of biological role, with CysN forms the ATP sulfurylase (ATPS) that catalyzes the adenylation of sulfate producing adenosine 5'-phosphosulfate (APS) and diphosphate, the first enzymatic step in sulfur assimilation pathway. APS synthesis involves the formation of a high-energy phosphoric-sulfuric acid anhydride bond driven by GTP hydrolysis by CysN coupled to ATP hydrolysis by CysD. This is Sulfate adenylyltransferase subunit 2 from Vibrio cholerae serotype O1 (strain ATCC 39315 / El Tor Inaba N16961).